The primary structure comprises 362 residues: Flagellar P-ring protein (362 aa).

An N-terminal signal peptide occupies residues Met1–Ala15.

The protein belongs to the FlgI family. As to quaternary structure, the basal body constitutes a major portion of the flagellar organelle and consists of four rings (L,P,S, and M) mounted on a central rod.

The protein localises to the periplasm. The protein resides in the bacterial flagellum basal body. In terms of biological role, assembles around the rod to form the L-ring and probably protects the motor/basal body from shearing forces during rotation. The polypeptide is Flagellar P-ring protein (Pseudomonas fluorescens (strain Pf0-1)).